Reading from the N-terminus, the 458-residue chain is UDP-N-acetylmuramoylalanine--D-glutamate ligase (458 aa).

Residue 124–130 participates in ATP binding; sequence GSDGKTT.

The protein belongs to the MurCDEF family.

The protein resides in the cytoplasm. It carries out the reaction UDP-N-acetyl-alpha-D-muramoyl-L-alanine + D-glutamate + ATP = UDP-N-acetyl-alpha-D-muramoyl-L-alanyl-D-glutamate + ADP + phosphate + H(+). It functions in the pathway cell wall biogenesis; peptidoglycan biosynthesis. Functionally, cell wall formation. Catalyzes the addition of glutamate to the nucleotide precursor UDP-N-acetylmuramoyl-L-alanine (UMA). The sequence is that of UDP-N-acetylmuramoylalanine--D-glutamate ligase from Clostridium botulinum (strain Alaska E43 / Type E3).